The sequence spans 159 residues: Ribosomal RNA large subunit methyltransferase H (159 aa).

S-adenosyl-L-methionine-binding positions include Leu-76, Gly-108, and Phe-127 to Phe-132.

Belongs to the RNA methyltransferase RlmH family. In terms of assembly, homodimer.

It localises to the cytoplasm. The catalysed reaction is pseudouridine(1915) in 23S rRNA + S-adenosyl-L-methionine = N(3)-methylpseudouridine(1915) in 23S rRNA + S-adenosyl-L-homocysteine + H(+). In terms of biological role, specifically methylates the pseudouridine at position 1915 (m3Psi1915) in 23S rRNA. This chain is Ribosomal RNA large subunit methyltransferase H, found in Geobacillus kaustophilus (strain HTA426).